The sequence spans 315 residues: Putative methyltransferase NSUN5C (315 aa).

Residues 50-56, Asp-74, Arg-79, and Asp-121 contribute to the S-adenosyl-L-methionine site; that span reads VPPQAIK. The active-site Nucleophile is the Cys-175. The interval 245–269 is disordered; the sequence is TSASQAKASAPERTPSPAPKRKKRA.

The protein belongs to the class I-like SAM-binding methyltransferase superfamily. RsmB/NOP family. Ubiquitous.

In terms of biological role, may have S-adenosyl-L-methionine-dependent methyl-transferase activity. This chain is Putative methyltransferase NSUN5C (NSUN5P2), found in Homo sapiens (Human).